The primary structure comprises 264 residues: Thymidylate synthase (264 aa).

Arg-21 lines the dUMP pocket. His-51 contacts (6R)-5,10-methylene-5,6,7,8-tetrahydrofolate. A dUMP-binding site is contributed by 126 to 127; it reads RR. Cys-146 acts as the Nucleophile in catalysis. DUMP is bound by residues 166-169, Asn-177, and 207-209; these read RSAD and HLY. Asp-169 contacts (6R)-5,10-methylene-5,6,7,8-tetrahydrofolate. Ala-263 contacts (6R)-5,10-methylene-5,6,7,8-tetrahydrofolate.

Belongs to the thymidylate synthase family. Bacterial-type ThyA subfamily. As to quaternary structure, homodimer.

The protein resides in the cytoplasm. It catalyses the reaction dUMP + (6R)-5,10-methylene-5,6,7,8-tetrahydrofolate = 7,8-dihydrofolate + dTMP. Its pathway is pyrimidine metabolism; dTTP biosynthesis. Its function is as follows. Catalyzes the reductive methylation of 2'-deoxyuridine-5'-monophosphate (dUMP) to 2'-deoxythymidine-5'-monophosphate (dTMP) while utilizing 5,10-methylenetetrahydrofolate (mTHF) as the methyl donor and reductant in the reaction, yielding dihydrofolate (DHF) as a by-product. This enzymatic reaction provides an intracellular de novo source of dTMP, an essential precursor for DNA biosynthesis. The sequence is that of Thymidylate synthase from Stutzerimonas stutzeri (strain A1501) (Pseudomonas stutzeri).